A 275-amino-acid polypeptide reads, in one-letter code: Putative phosphoenolpyruvate synthase regulatory protein (275 aa).

153–160 (GVSRTGKT) contributes to the ADP binding site.

This sequence belongs to the pyruvate, phosphate/water dikinase regulatory protein family. PSRP subfamily.

It catalyses the reaction [pyruvate, water dikinase] + ADP = [pyruvate, water dikinase]-phosphate + AMP + H(+). The catalysed reaction is [pyruvate, water dikinase]-phosphate + phosphate + H(+) = [pyruvate, water dikinase] + diphosphate. Functionally, bifunctional serine/threonine kinase and phosphorylase involved in the regulation of the phosphoenolpyruvate synthase (PEPS) by catalyzing its phosphorylation/dephosphorylation. This Nitrosomonas europaea (strain ATCC 19718 / CIP 103999 / KCTC 2705 / NBRC 14298) protein is Putative phosphoenolpyruvate synthase regulatory protein.